We begin with the raw amino-acid sequence, 514 residues long: Cytochrome P450 monooxygenase FUS8 (514 aa).

Residues Leu28–Phe48 traverse the membrane as a helical segment. Residues Asn225 and Asn443 are each glycosylated (N-linked (GlcNAc...) asparagine). Residue Cys460 participates in heme binding.

It belongs to the cytochrome P450 family. The cofactor is heme.

The protein resides in the membrane. It functions in the pathway mycotoxin biosynthesis. In terms of biological role, cytochrome P450 monooxygenase; part of the gene cluster that mediates the biosynthesis of the mycotoxin fusarin C. Within the cluster, FUS1, FUS2, FUS8 and FUS9 are sufficient for fusarin production. The roles of the other FUS members are yet undetermined. The fusarin C synthetase FUS1 is responsible for the condensation of one acetyl-coenzyme A (CoA) unit with six malonyl-CoA units and the amide linkage of the arising heptaketide and homoserine, subsequently releasing the first intermediate, prefusarin, as an alcohol with an open ring structure. The cytochrome P450 monooxygenase FUS8 participates in multiple oxidation processes at carbon C-20 and is able to use the FUS1 product as substrate, resulting in formation of 20-hydroxy-prefusarin. This reaction seems to be essential before the 2-pyrrolidone ring closure can be catalyzed by FUS2, generating 20-hydroxy-fusarin. FUS8 is able to further oxidizes carbon C-20 after ring closure, resulting in the formation of carboxy-fusarin C. As the last step, FUS9 methylates the hydroxyl group at C-21 to generate fusarin C. Fusarin C can then rearrange to epi-fusarin C, the (z)-isomers, and fusarin A and fusarin D. In Gibberella moniliformis (strain M3125 / FGSC 7600) (Maize ear and stalk rot fungus), this protein is Cytochrome P450 monooxygenase FUS8.